Here is a 303-residue protein sequence, read N- to C-terminus: Probable cell division protein WhiA (303 aa).

Positions Ser-272–Leu-303 form a DNA-binding region, H-T-H motif.

Belongs to the WhiA family.

In terms of biological role, involved in cell division and chromosome segregation. The polypeptide is Probable cell division protein WhiA (Streptococcus sanguinis (strain SK36)).